Consider the following 192-residue polypeptide: Peptidyl-tRNA hydrolase (192 aa).

Residue histidine 19 is the Proton acceptor of the active site. Residues tyrosine 64, asparagine 66, and asparagine 112 each contribute to the tRNA site.

It belongs to the PTH family. In terms of assembly, monomer.

The protein localises to the cytoplasm. It catalyses the reaction an N-acyl-L-alpha-aminoacyl-tRNA + H2O = an N-acyl-L-amino acid + a tRNA + H(+). Hydrolyzes ribosome-free peptidyl-tRNAs (with 1 or more amino acids incorporated), which drop off the ribosome during protein synthesis, or as a result of ribosome stalling. Its function is as follows. Catalyzes the release of premature peptidyl moieties from peptidyl-tRNA molecules trapped in stalled 50S ribosomal subunits, and thus maintains levels of free tRNAs and 50S ribosomes. This chain is Peptidyl-tRNA hydrolase, found in Acidiphilium cryptum (strain JF-5).